The following is a 490-amino-acid chain: Phenylacetaldehyde synthase (490 aa).

3 residues coordinate L-phenylalanine: Pro-92, His-193, and His-308. Lys-309 is modified (N6-(pyridoxal phosphate)lysine). Phe-338 contributes to the L-phenylalanine binding site.

It belongs to the group II decarboxylase family. As to quaternary structure, homodimer. It depends on pyridoxal 5'-phosphate as a cofactor. Expressed in roots, rosette leaves, stems, cauline leaves and flowers.

The enzyme catalyses L-phenylalanine + O2 + H2O + H(+) = 2-phenylacetaldehyde + H2O2 + NH4(+) + CO2. It carries out the reaction L-dopa + O2 + H2O + H(+) = 3,4-dihydroxyphenylacetaldehyde + H2O2 + NH4(+) + CO2. In terms of biological role, bifunctional enzyme that catalyzes the decarboxylation of L-phenylalanine to 2-phenylethylamine, which is then oxidized to form 2-phenylacetaldehyde, a constituent of floral scent. 2-phenylacetaldehyde is a precursor of 2-phenylethanol, another constituent of floral scent. Catalyzes both the decarboxylation and deamination of L-dopa to 3,4-dihydroxylphenylacetaldehyde (DHPAA). The chain is Phenylacetaldehyde synthase from Arabidopsis thaliana (Mouse-ear cress).